The following is a 124-amino-acid chain: Putative iron-sulfur cluster insertion protein ErpA (124 aa).

Residues cysteine 49, cysteine 113, and cysteine 115 each contribute to the iron-sulfur cluster site.

This sequence belongs to the HesB/IscA family. In terms of assembly, homodimer. Iron-sulfur cluster is required as a cofactor.

In terms of biological role, required for insertion of 4Fe-4S clusters. This Acidovorax sp. (strain JS42) protein is Putative iron-sulfur cluster insertion protein ErpA.